Reading from the N-terminus, the 77-residue chain is Conotoxin ArMKLT2-0322 (77 aa).

An N-terminal signal peptide occupies residues 1–22 (MKLTCVLIIAVLFLIVCQLNTA). Positions 23 to 47 (DDSRDKQEYRAVRLRDAIRNSRGSR) are excised as a propeptide. 3 disulfides stabilise this stretch: Cys49–Cys62, Cys56–Cys67, and Cys61–Cys74.

Belongs to the conotoxin O1 superfamily. In terms of tissue distribution, expressed by the venom duct.

It is found in the secreted. In Conus arenatus (Sand-dusted cone), this protein is Conotoxin ArMKLT2-0322.